The sequence spans 208 residues: Thymidylate kinase (208 aa).

10 to 17 (GPEGSGKT) contacts ATP.

Belongs to the thymidylate kinase family.

It carries out the reaction dTMP + ATP = dTDP + ADP. Its function is as follows. Phosphorylation of dTMP to form dTDP in both de novo and salvage pathways of dTTP synthesis. This chain is Thymidylate kinase, found in Bacillus cereus (strain ATCC 10987 / NRS 248).